We begin with the raw amino-acid sequence, 132 residues long: Interleukin-5 (132 aa).

Positions 1–19 (MRMLLCLNVLTLSCVWAIA) are cleaved as a signal peptide. N-linked (GlcNAc...) asparagine glycans are attached at residues N45, N74, and N88.

The protein belongs to the IL-5 family. Homodimer; disulfide-linked. Interacts with IL5RA. Interacts with CSF2RB.

The protein localises to the secreted. Homodimeric cytokine expressed predominantly by T-lymphocytes and NK cells that plays an important role in the survival, differentiation, and chemotaxis of eosinophils. Acts also on activated and resting B-cells to induce immunoglobulin production, growth, and differentiation. Mechanistically, exerts its biological effects through a receptor composed of IL5RA subunit and the cytokine receptor common subunit beta/CSF2RB. Binding to the receptor leads to activation of various kinases including LYN, SYK and JAK2 and thereby propagates signals through the RAS-MAPK and JAK-STAT5 pathways respectively. The polypeptide is Interleukin-5 (Il5) (Rattus norvegicus (Rat)).